The chain runs to 631 residues: MGLPRGPEGQGLPEVETREDEEQNVKLTEILELLVAAGYFRARIKGLSPFDKVVGGMTWCITTCNFDVDVDLLFQENSTIGQKIALSEKIVSVLPRMKCPHQLEPHQIQGMDFIHIFPVVQWLVKRAIETKEEMGDYIRSYSVSQFQKTYSLPEDDDFIKRKEKAIKTVVDLSEVYKPRRKYKRHQGAEELLDEESRIHATLLEYGRRYGFSRQSKMEKAEDKKTALPAGLSATEKADAHEEDELRAAEEQRIQSLMTKMTAMANEESRLTASSVGQIVGLCSAEIKQIVSEYAEKQSELSAEESPEKLGTSQLHRRKVISLNKQIAQKTKHLEELRASHTSLQARYNEAKKTLTELKTYSEKLDKEQAALEKIESKADPSILQNLRALVAMNENLKSQEQEFKAHCREEMTRLQQEIENLKAERAPRGDEKTLSSGEPPGTLTSAMTHDEDLDRRYNMEKEKLYKIRLLQARRNREIAILHRKIDEVPSRAELIQYQKRFIELYRQISAVHKETKQFFTLYNTLDDKKVYLEKEISLLNSIHENFSQAMASPAARDQFLRQMEQIVEGIKQSRMKMEKKKQENKMRRDQLNDQYLELLEKQRLYFKTVKEFKEEGRKNEMLLSKVKAKAS.

Disordered regions lie at residues 1 to 23 and 214 to 243; these read MGLP…DEEQ and QSKM…HEED. The segment at 1 to 430 is sufficient for interaction with CCDC22; sequence MGLPRGPEGQ…LKAERAPRGD (430 aa). Positions 215-225 are enriched in basic and acidic residues; the sequence is SKMEKAEDKKT. Phosphoserine occurs at positions 298, 301, and 305. Residues 309–631 adopt a coiled-coil conformation; the sequence is LGTSQLHRRK…LLSKVKAKAS (323 aa). Over residues 421–433 the composition is skewed to basic and acidic residues; sequence LKAERAPRGDEKT. The tract at residues 421–447 is disordered; sequence LKAERAPRGDEKTLSSGEPPGTLTSAM. A sufficient for interaction with WASHC2C region spans residues 448 to 631; it reads THDEDLDRRY…LLSKVKAKAS (184 aa).

The protein belongs to the CCDC93 family. As to quaternary structure, component of the commander complex consisting of the CCC subcomplex and the retriever subcomplex. Component of the CCC (COMMD/CCDC22/CCDC93) subcomplex consisting of COMMD1, COMMD2, COMMD3, COMMD4, COMMD5, COMMD6, COMMD7, COMMD8, COMMD9, COMMD10, CCDC22 and CCDC93. Forms a coiled-coil heterodimer with CCDC22; this heterodimer interacts with the guanine nucleotide exchange factor DENND10; the interaction is direct. Interacts with WASHC1. Interacts directly with WASHC2C. Interacts with SNX17 and SNX31.

It localises to the early endosome. Its function is as follows. Component of the commander complex that is essential for endosomal recycling of transmembrane cargos; the commander complex is composed of composed of the CCC subcomplex and the retriever subcomplex. Component of the CCC complex, which is involved in the regulation of endosomal recycling of surface proteins, including integrins, signaling receptor and channels. The CCC complex associates with SNX17, retriever and WASH complexes to prevent lysosomal degradation and promote cell surface recycling of numerous cargos such as integrins ITGA5:ITGB1. Involved in copper-dependent ATP7A trafficking between the trans-Golgi network and vesicles in the cell periphery; the function is proposed to depend on its association within the CCC complex and cooperation with the WASH complex on early endosomes and is dependent on its interaction with WASHC2C. Functionally, (Microbial infection) The CCC complex, in collaboration with the heterotrimeric retriever complex, mediates the exit of human papillomavirus to the cell surface. In Homo sapiens (Human), this protein is Coiled-coil domain-containing protein 93 (CCDC93).